Reading from the N-terminus, the 422-residue chain is Trichothecene biosynthesis transcription regulator TRI10 (422 aa).

Belongs to the TRI10 transcription regulator family.

The protein resides in the nucleus. In terms of biological role, transcriptional activator of all of the trichothecene biosynthesis genes. Acts upstream of the cluster-encoded transcription factor TRI6 and is necessary for full expression of both the other trichothecene genes and the genes for the primary metabolic pathway that precedes the trichothecene biosynthetic pathway. The sequence is that of Trichothecene biosynthesis transcription regulator TRI10 from Trichoderma arundinaceum.